A 637-amino-acid chain; its full sequence is Probable serine/threonine-protein kinase DDB_G0283065 (637 aa).

2 disordered regions span residues 36–88 (NNNN…KFNR) and 155–234 (NSNN…RFNN). The segment covering 53-85 (NNSTTKSIDNNNNNTNNSNSNNNNNDNIKNNNK) has biased composition (low complexity). Residues 236–629 (FNDVRVLGKG…NQISTDYDNF (394 aa)) enclose the Protein kinase domain. Residues 242–250 (LGKGGFGIV) and Lys265 each bind ATP. The Proton acceptor role is filled by Asp479.

This sequence belongs to the protein kinase superfamily. Ser/Thr protein kinase family. GCN2 subfamily.

The enzyme catalyses L-seryl-[protein] + ATP = O-phospho-L-seryl-[protein] + ADP + H(+). The catalysed reaction is L-threonyl-[protein] + ATP = O-phospho-L-threonyl-[protein] + ADP + H(+). This is Probable serine/threonine-protein kinase DDB_G0283065 from Dictyostelium discoideum (Social amoeba).